Reading from the N-terminus, the 84-residue chain is Small ribosomal subunit protein bS18 (84 aa).

This sequence belongs to the bacterial ribosomal protein bS18 family. Part of the 30S ribosomal subunit. Forms a tight heterodimer with protein bS6.

Its function is as follows. Binds as a heterodimer with protein bS6 to the central domain of the 16S rRNA, where it helps stabilize the platform of the 30S subunit. This chain is Small ribosomal subunit protein bS18, found in Polynucleobacter necessarius subsp. necessarius (strain STIR1).